We begin with the raw amino-acid sequence, 205 residues long: Coatomer subunit zeta-2 (205 aa).

Residues 1–12 (MQRPEAWPRPHP) are compositionally biased toward basic and acidic residues. The tract at residues 1–33 (MQRPEAWPRPHPGEGASAAQAGGAAPPTRATEQ) is disordered. Residues 13-30 (GEGASAAQAGGAAPPTRA) are compositionally biased toward low complexity.

This sequence belongs to the adaptor complexes small subunit family. Oligomeric complex.

The protein resides in the cytoplasm. Its subcellular location is the cytosol. It localises to the endoplasmic reticulum-Golgi intermediate compartment membrane. The protein localises to the golgi apparatus membrane. It is found in the cytoplasmic vesicle. The protein resides in the COPI-coated vesicle membrane. In terms of biological role, the coatomer is a cytosolic protein complex that binds to dilysine motifs and reversibly associates with Golgi non-clathrin-coated vesicles, which further mediate biosynthetic protein transport from the ER, via the Golgi up to the trans Golgi network. Coatomer complex is required for budding from Golgi membranes, and is essential for the retrograde Golgi-to-ER transport of dilysine-tagged proteins. The zeta subunit may be involved in regulating the coat assembly and, hence, the rate of biosynthetic protein transport due to its association-dissociation properties with the coatomer complex. This is Coatomer subunit zeta-2 (Copz2) from Mus musculus (Mouse).